An 81-amino-acid chain; its full sequence is ATP synthase subunit c (81 aa).

The next 2 membrane-spanning stretches (helical) occupy residues 7–27 (AASV…PGLG) and 57–77 (FAFM…LLFA).

The protein belongs to the ATPase C chain family. As to quaternary structure, F-type ATPases have 2 components, F(1) - the catalytic core - and F(0) - the membrane proton channel. F(1) has five subunits: alpha(3), beta(3), gamma(1), delta(1), epsilon(1). F(0) has four main subunits: a(1), b(1), b'(1) and c(10-14). The alpha and beta chains form an alternating ring which encloses part of the gamma chain. F(1) is attached to F(0) by a central stalk formed by the gamma and epsilon chains, while a peripheral stalk is formed by the delta, b and b' chains.

It is found in the cellular thylakoid membrane. Its function is as follows. F(1)F(0) ATP synthase produces ATP from ADP in the presence of a proton or sodium gradient. F-type ATPases consist of two structural domains, F(1) containing the extramembraneous catalytic core and F(0) containing the membrane proton channel, linked together by a central stalk and a peripheral stalk. During catalysis, ATP synthesis in the catalytic domain of F(1) is coupled via a rotary mechanism of the central stalk subunits to proton translocation. Key component of the F(0) channel; it plays a direct role in translocation across the membrane. A homomeric c-ring of between 10-14 subunits forms the central stalk rotor element with the F(1) delta and epsilon subunits. This chain is ATP synthase subunit c, found in Prochlorococcus marinus (strain MIT 9301).